The following is a 305-amino-acid chain: tRNA pseudouridine synthase B (305 aa).

Catalysis depends on aspartate 39, which acts as the Nucleophile. The PUA domain occupies 237–305; that stretch reads LPVIIVPGEF…FLLKPHKVLK (69 aa).

Belongs to the pseudouridine synthase TruB family. Type 1 subfamily.

The catalysed reaction is uridine(55) in tRNA = pseudouridine(55) in tRNA. Functionally, responsible for synthesis of pseudouridine from uracil-55 in the psi GC loop of transfer RNAs. This chain is tRNA pseudouridine synthase B, found in Moorella thermoacetica (strain ATCC 39073 / JCM 9320).